The primary structure comprises 336 residues: MMRLLFVFFMVHTIFIPCFSFDTPGKDLPLTLDYYKSTCPTVFDVIKKEMECIVKEDPRNAAIIIRLHFHDCFVQGCDGSVLLDETETLQGEKKASPNINSLKGYKIVDRIKNIIESECPGVVSCADLLTIGARDATILVGGPYWDVPVGRKDSKTASYELATTNLPTPEEGLISIIAKFYSQGLSVEDMVALIGAHTIGKAQCRNFRSRIYGDFQVTSALNPVSETYLASLREICPASSGEGDSNVTAIDNVTPNLFDNSIYHTLLRGEGLLNSDQEMYTSLFGIQTRRIVSKYAEDPVAFFEQFSKSMVKMGNILNSESLADGEVRRNCRFVNT.

Residues 1-20 (MMRLLFVFFMVHTIFIPCFS) form the signal peptide. 4 disulfide bridges follow: cysteine 39-cysteine 119, cysteine 72-cysteine 77, cysteine 125-cysteine 331, and cysteine 204-cysteine 236. The active-site Proton acceptor is the histidine 70. Aspartate 71, valine 74, glycine 76, aspartate 78, and serine 80 together coordinate Ca(2+). Proline 167 contacts substrate. Residue histidine 197 participates in heme b binding. Residue threonine 198 coordinates Ca(2+). Asparagine 246 carries an N-linked (GlcNAc...) asparagine glycan. Ca(2+)-binding residues include aspartate 251, threonine 254, and aspartate 259.

The protein belongs to the peroxidase family. Classical plant (class III) peroxidase subfamily. Heme b serves as cofactor. Requires Ca(2+) as cofactor. As to expression, expressed in roots and stems.

Its subcellular location is the secreted. It catalyses the reaction 2 a phenolic donor + H2O2 = 2 a phenolic radical donor + 2 H2O. Functionally, removal of H(2)O(2), oxidation of toxic reductants, biosynthesis and degradation of lignin, suberization, auxin catabolism, response to environmental stresses such as wounding, pathogen attack and oxidative stress. These functions might be dependent on each isozyme/isoform in each plant tissue. The protein is Peroxidase 11 (PER11) of Arabidopsis thaliana (Mouse-ear cress).